The sequence spans 381 residues: MNMAQTVTQNPRGVKTLLPLDVELRNVFKFFNQEPAVHGVDLDVKQGEFFSILGPSGCGKTTTLRLIAGFEQVDAGKLLIQGQPMTNIPPYRRPVNTVFQSYALFNHLNVWDNVAFGLRLKKSRKSEVESRVKEALKLVKMESLRSRFPSQLSGGQQQRVALARALVNRPAVVLLDEPLGALDLKLRKEMQVELSNLHKNLGLTFIMVTHDQEEALSLSDRIAVMNQGKIEQIGTPQEIYERPKTSFVADFIGDTNLFSGEITVLEAEYIQIVTKTGLTIVVARNEDTPAELLKSVVVSVRPEKIQLSLYPPSSLNNCFEGRLINVMYLGTHVNYLVQLINGININVLQPNTFGNLPDRETPIYAWWAESDCLAINQMTND.

An ABC transporter domain is found at 22 to 252 (VELRNVFKFF…PKTSFVADFI (231 aa)). ATP is bound at residue 54–61 (GPSGCGKT).

This sequence belongs to the ABC transporter superfamily. Spermidine/putrescine importer (TC 3.A.1.11.1) family. In terms of assembly, the complex is composed of two ATP-binding proteins (PotA), two transmembrane proteins (PotB and PotC) and a solute-binding protein (PotD).

It is found in the cell inner membrane. It catalyses the reaction ATP + H2O + polyamine-[polyamine-binding protein]Side 1 = ADP + phosphate + polyamineSide 2 + [polyamine-binding protein]Side 1.. Functionally, part of the ABC transporter complex PotABCD involved in spermidine/putrescine import. Responsible for energy coupling to the transport system. This Trichormus variabilis (strain ATCC 29413 / PCC 7937) (Anabaena variabilis) protein is Spermidine/putrescine import ATP-binding protein PotA.